A 392-amino-acid chain; its full sequence is MAVIKMTDLDLKGKRVLIREDLNVPLKEGKVADDTRIRASLPTIRHALESGARVMLLSHLGRPKEGEPDPAASLRPVAEHLATLLGQEVPLAEDWLDGVEVAEGQAVLCENVRFNVGEKANDEALAKRMAALCDVYVMDAFGTAHRAQASTHGVGQYAPVACAGPLLAAELEALGKALEAPARPMTAIVGGSKVSTKLDVLETLSEKVDQLIVGGGIANTFIAAAGHPVGKSLYEADLVDKARQLMDTARANGGEIPVPTDVVVGREFSADTQAVVKRVDEVDDEDMIFDIGPETAQRYAGMMREAGTIVWNGPVGVFEFDQFGEGTRKLGEAIAESDGFSIAGGGDTVAAVEKYGLADRISYISTGGGAFLEFLEGKTLPAVAMLEARASD.

Substrate contacts are provided by residues 21–23 (DLN), arginine 36, 59–62 (HLGR), arginine 113, and arginine 146. ATP-binding positions include lysine 197, glutamate 319, and 345 to 348 (GGDT).

This sequence belongs to the phosphoglycerate kinase family. In terms of assembly, monomer.

The protein localises to the cytoplasm. The enzyme catalyses (2R)-3-phosphoglycerate + ATP = (2R)-3-phospho-glyceroyl phosphate + ADP. It functions in the pathway carbohydrate degradation; glycolysis; pyruvate from D-glyceraldehyde 3-phosphate: step 2/5. The sequence is that of Phosphoglycerate kinase from Alkalilimnicola ehrlichii (strain ATCC BAA-1101 / DSM 17681 / MLHE-1).